Reading from the N-terminus, the 406-residue chain is Histone-lysine N-methyltransferase SUV39H2 (406 aa).

The 59-residue stretch at 43-101 (YEVEYLCDYRIEKGVEKFFVKWKGWPESCNTWEPTRNLKCPTLLKQFYSDLYNYFCALK) folds into the Chromo domain. Residues 185 to 243 (VGCDCSDCFKGKCCPTEAGVLFAYNEHRQIKIPPGRPIYECNSRCKCGPDCPNRVVQKG) enclose the Pre-SET domain. Residues Cys-187, Cys-189, Cys-192, Cys-197, Cys-198, Cys-225, Cys-229, Cys-231, and Cys-235 each contribute to the Zn(2+) site. Residues 246 to 369 (YSLCIFRTDN…AGEELTFDYQ (124 aa)) enclose the SET domain. S-adenosyl-L-methionine contacts are provided by residues 257-259 (RGW), Tyr-300, and 326-327 (NH). Zn(2+) contacts are provided by Cys-329, Cys-394, Cys-396, and Cys-401. Residues 390-406 (VRIACKCGAATCRGYLN) enclose the Post-SET domain.

The protein belongs to the class V-like SAM-binding methyltransferase superfamily. Histone-lysine methyltransferase family. Suvar3-9 subfamily.

Its subcellular location is the nucleus. The protein resides in the chromosome. The protein localises to the centromere. The catalysed reaction is L-lysyl(9)-[histone H3] + 3 S-adenosyl-L-methionine = N(6),N(6),N(6)-trimethyl-L-lysyl(9)-[histone H3] + 3 S-adenosyl-L-homocysteine + 3 H(+). Histone methyltransferase that specifically trimethylates 'Lys-9' of histone H3 using monomethylated H3 'Lys-9' as substrate. H3 'Lys-9' trimethylation represents a specific tag for epigenetic transcriptional repression by recruiting HP1 (CBX1, CBX3 and/or CBX5) proteins to methylated histones. Mainly functions in heterochromatin regions, thereby playing a central role in the establishment of constitutive heterochromatin at pericentric and telomere regions. H3 'Lys-9' trimethylation is also required to direct DNA methylation at pericentric repeats. SUV39H1 is targeted to histone H3 via its interaction with RB1 and is involved in many processes. This Xenopus tropicalis (Western clawed frog) protein is Histone-lysine N-methyltransferase SUV39H2 (suv39h2).